The primary structure comprises 374 residues: Flagellar P-ring protein 1 (374 aa).

The first 29 residues, 1 to 29 (MPGVRWVRIVGVACAALSALALSVTSASA), serve as a signal peptide directing secretion.

It belongs to the FlgI family. As to quaternary structure, the basal body constitutes a major portion of the flagellar organelle and consists of four rings (L,P,S, and M) mounted on a central rod.

Its subcellular location is the periplasm. The protein localises to the bacterial flagellum basal body. Assembles around the rod to form the L-ring and probably protects the motor/basal body from shearing forces during rotation. The sequence is that of Flagellar P-ring protein 1 from Bradyrhizobium diazoefficiens (strain JCM 10833 / BCRC 13528 / IAM 13628 / NBRC 14792 / USDA 110).